The primary structure comprises 351 residues: tRNA-specific 2-thiouridylase MnmA (351 aa).

Residues 7–14 (GLSGGVDS) and Leu33 contribute to the ATP site. The active-site Nucleophile is Cys94. A disulfide bridge connects residues Cys94 and Cys193. Residue Gly119 coordinates ATP. The segment at 143-145 (KDQ) is interaction with tRNA. Catalysis depends on Cys193, which acts as the Cysteine persulfide intermediate. Residues 298–299 (RY) are interaction with tRNA.

Belongs to the MnmA/TRMU family.

It is found in the cytoplasm. It carries out the reaction S-sulfanyl-L-cysteinyl-[protein] + uridine(34) in tRNA + AH2 + ATP = 2-thiouridine(34) in tRNA + L-cysteinyl-[protein] + A + AMP + diphosphate + H(+). Functionally, catalyzes the 2-thiolation of uridine at the wobble position (U34) of tRNA, leading to the formation of s(2)U34. This Nostoc punctiforme (strain ATCC 29133 / PCC 73102) protein is tRNA-specific 2-thiouridylase MnmA.